Reading from the N-terminus, the 158-residue chain is Interleukin-17A (158 aa).

The signal sequence occupies residues 1-25; sequence MSPGRASSVSLMLLLLLSLAATVKA. Residue asparagine 71 is glycosylated (N-linked (GlcNAc...) asparagine). Intrachain disulfides connect cysteine 97/cysteine 147 and cysteine 102/cysteine 149.

Belongs to the IL-17 family. As to quaternary structure, homodimer. Forms complexes with IL17RA and IL17RC receptors with 2:1 binding stoichiometry: two receptor chains for one interleukin molecule. IL17A homodimer preferentially drives the formation of IL17RA-IL17RC heterodimeric receptor complex. IL17A homodimer adopts an asymmetrical ternary structure with one IL17RA molecule, allowing for high affinity interactions of one IL17A monomer with one IL17RA molecule (via D1 and D2 domains), while disfavoring binding of a second IL17RA molecule on the other IL17A monomer. Heterodimer with IL17F. IL17A-IL17F forms complexes with IL17RA-IL17RC, but with lower affinity when compared to IL17A homodimer. IL17RA and IL17RC chains cannot distinguish between IL17A and IL17F molecules, potentially enabling the formation of topologically distinct complexes. In terms of tissue distribution, expressed by Th17 cell lineage (at protein level). The expression pattern reflects the differentiation state, with IL17A-IL17F heterodimers produced at higher levels than IL17A-IL17A and IL17F-IL17F dimers in fully differentiated Th17 cells. Expressed in innate lymphoid cells (at protein level). Expressed in gamma-delta T cell subsets (at protein level). Expressed in iNKT cells (at protein level).

It is found in the secreted. Effector cytokine of innate and adaptive immune system involved in antimicrobial host defense and maintenance of tissue integrity. Signals via IL17RA-IL17RC heterodimeric receptor complex, triggering homotypic interaction of IL17RA and IL17RC chains with TRAF3IP2 adapter. This leads to downstream TRAF6-mediated activation of NF-kappa-B and MAPkinase pathways ultimately resulting in transcriptional activation of cytokines, chemokines, antimicrobial peptides and matrix metalloproteinases, with potential strong immune inflammation. Plays an important role in connecting T cell-mediated adaptive immunity and acute inflammatory response to destroy extracellular bacteria and fungi. As a signature effector cytokine of T-helper 17 cells (Th17), primarily induces neutrophil activation and recruitment at infection and inflammatory sites. In airway epithelium, mediates neutrophil chemotaxis via induction of CXCL1 and CXCL5 chemokines. In secondary lymphoid organs, contributes to germinal center formation by regulating the chemotactic response of B cells to CXCL12 and CXCL13, enhancing retention of B cells within the germinal centers, B cell somatic hypermutation rate and selection toward plasma cells. Effector cytokine of a subset of gamma-delta T cells that functions as part of an inflammatory circuit downstream IL1B, TLR2 and IL23A-IL12B to promote neutrophil recruitment for efficient bacterial clearance. Effector cytokine of innate immune cells including invariant natural killer cell (iNKT) and group 3 innate lymphoid cells that mediate initial neutrophilic inflammation. Involved in the maintenance of the integrity of epithelial barriers during homeostasis and pathogen infection. Upon acute injury, has a direct role in epithelial barrier formation by regulating OCLN localization and tight junction biogenesis. As part of the mucosal immune response induced by commensal bacteria, enhances host's ability to resist pathogenic bacterial and fungal infections by promoting neutrophil recruitment and antimicrobial peptides release. In synergy with IL17F, mediates the production of antimicrobial beta-defensins DEFB1, DEFB103A, and DEFB104A by mucosal epithelial cells, limiting the entry of microbes through the epithelial barriers. Involved in antiviral host defense through various mechanisms. Enhances immunity against West Nile virus by promoting T cell cytotoxicity. May play a beneficial role in influenza A virus (H5N1) infection by enhancing B cell recruitment and immune response in the lung. Contributes to influenza A virus (H1N1) clearance by driving the differentiation of B-1a B cells, providing for production of virus-specific IgM antibodies at first line of host defense. The chain is Interleukin-17A (Il17a) from Mus musculus (Mouse).